The sequence spans 279 residues: Undecaprenyl-diphosphatase (279 aa).

6 helical membrane-spanning segments follow: residues F45–Y65, W85–F105, F113–V133, S188–L208, L226–L246, and F255–V275.

This sequence belongs to the UppP family.

It localises to the cell membrane. The catalysed reaction is di-trans,octa-cis-undecaprenyl diphosphate + H2O = di-trans,octa-cis-undecaprenyl phosphate + phosphate + H(+). Functionally, catalyzes the dephosphorylation of undecaprenyl diphosphate (UPP). Confers resistance to bacitracin. The polypeptide is Undecaprenyl-diphosphatase (Streptococcus agalactiae serotype III (strain NEM316)).